The following is a 164-amino-acid chain: Ubiquitin-fold modifier-conjugating enzyme 1 (164 aa).

The Glycyl thioester intermediate role is filled by Cys-116.

The protein belongs to the ubiquitin-conjugating enzyme family. UFC1 subfamily.

In terms of biological role, E2-like enzyme which forms an intermediate with UFM1 via a thioester linkage. The sequence is that of Ubiquitin-fold modifier-conjugating enzyme 1 from Drosophila ananassae (Fruit fly).